A 627-amino-acid chain; its full sequence is DNA-directed RNA polymerase subunit gamma (627 aa).

Zn(2+) is bound by residues cysteine 70, cysteine 72, cysteine 85, and cysteine 88. The Mg(2+) site is built by aspartate 468, aspartate 470, and aspartate 472.

It belongs to the RNA polymerase beta' chain family. RpoC1 subfamily. In cyanobacteria the RNAP catalytic core is composed of 2 alpha, 1 beta, 1 beta', 1 gamma and 1 omega subunit. When a sigma factor is associated with the core the holoenzyme is formed, which can initiate transcription. It depends on Mg(2+) as a cofactor. Zn(2+) serves as cofactor.

The catalysed reaction is RNA(n) + a ribonucleoside 5'-triphosphate = RNA(n+1) + diphosphate. Its function is as follows. DNA-dependent RNA polymerase catalyzes the transcription of DNA into RNA using the four ribonucleoside triphosphates as substrates. The protein is DNA-directed RNA polymerase subunit gamma of Synechococcus sp. (strain JA-2-3B'a(2-13)) (Cyanobacteria bacterium Yellowstone B-Prime).